Reading from the N-terminus, the 283-residue chain is Bifunctional protein FolD (283 aa).

NADP(+) is bound by residues 166-168 (GRS), Ser191, and Ile232.

The protein belongs to the tetrahydrofolate dehydrogenase/cyclohydrolase family. Homodimer.

The catalysed reaction is (6R)-5,10-methylene-5,6,7,8-tetrahydrofolate + NADP(+) = (6R)-5,10-methenyltetrahydrofolate + NADPH. It carries out the reaction (6R)-5,10-methenyltetrahydrofolate + H2O = (6R)-10-formyltetrahydrofolate + H(+). It functions in the pathway one-carbon metabolism; tetrahydrofolate interconversion. In terms of biological role, catalyzes the oxidation of 5,10-methylenetetrahydrofolate to 5,10-methenyltetrahydrofolate and then the hydrolysis of 5,10-methenyltetrahydrofolate to 10-formyltetrahydrofolate. The sequence is that of Bifunctional protein FolD from Rickettsia bellii (strain RML369-C).